The sequence spans 522 residues: Putative aminopeptidase W07G4.4 (522 aa).

Positions 271 and 276 each coordinate Zn(2+). Residue Lys283 is part of the active site. Positions 294, 354, and 356 each coordinate Zn(2+). The active site involves Arg358.

This sequence belongs to the peptidase M17 family. Zn(2+) is required as a cofactor.

The chain is Putative aminopeptidase W07G4.4 (lap-2) from Caenorhabditis elegans.